The following is a 154-amino-acid chain: Protein-export protein SecB (154 aa).

This sequence belongs to the SecB family. As to quaternary structure, homotetramer, a dimer of dimers. One homotetramer interacts with 1 SecA dimer.

The protein resides in the cytoplasm. One of the proteins required for the normal export of preproteins out of the cell cytoplasm. It is a molecular chaperone that binds to a subset of precursor proteins, maintaining them in a translocation-competent state. It also specifically binds to its receptor SecA. The sequence is that of Protein-export protein SecB from Vibrio parahaemolyticus serotype O3:K6 (strain RIMD 2210633).